An 801-amino-acid chain; its full sequence is Protein ACCUMULATION AND REPLICATION OF CHLOROPLASTS 6, chloroplastic (801 aa).

A chloroplast-targeting transit peptide spans 1-67 (MEALSHVGIG…SSSFATATTT (67 aa)). Topologically, residues 68–618 (ATLVSPPPSI…ADMLKEASVK (551 aa)) are stromal. Residues 89–153 (DFYQVLGAQT…RSRREYNEGL (65 aa)) enclose the J domain. Residues 619 to 638 (ILAAGVAIGLISLFSQKYFL) traverse the membrane as a helical segment. At 639–801 (KSSSSFQRKD…KITEGSVLAS (163 aa)) the chain is on the chloroplast intermembrane side. Residues 639 to 801 (KSSSSFQRKD…KITEGSVLAS (163 aa)) are interaction with PDV2.

In terms of assembly, self-interacts. Part of a complex made of ARC3, ARC6, FTSZ1 and FTSZ2. Interacts with FTSZ2-1 and FTSZ2-2 (via C-terminus), but not with FTSZ1; this interaction enables ARC3 binding to FTSZ2. Binds to CDT1A. Interacts (via C-terminus) with PDV2 (via C-terminus) in the chloroplast intermembrane space; this interaction induces homodimerization and leads to the formation of a heterotetramer containing two ARC6 and two PDV2 subunits. Interacts with MCD1 in the chloroplast stroma and facilitates its subsequent binding to FtsZ2-1. Interacts (via J domain) with CJD1 (via J-like domain). Mostly expressed in young leaves.

The protein localises to the plastid. It is found in the chloroplast inner membrane. Its function is as follows. Component of the plastid division machinery consisting in a binary fission accomplished by the simultaneous constriction of the FtsZ ring on the stromal side of the inner envelope membrane, and the ARC5 ring on the cytosolic side of the outer envelope membrane. Involved in the initiation of proplastid and plastid division (including chloroplasts, statoliths and leukoplasts). Promotes the assembly and/or stabilization of the plastid-dividing FtsZ ring, functioning as an antagonistic regulator of FtsZ dynamics against CDP1 and facilitating MCD1 positioning to membrane tethered FtsZ filaments to form the chloroplast Z-Ring; inhibits GDP-induced disassembly of FTSZ2 but enables ARC3 binding to FTSZ2-1. Relays plastid division site position between stroma and outer surface via interactions with the stromal FtsZ ring and the outer membrane PDV2 that recruits cytoplasmic ARC5 ring. Required for plastid equatorial positioning of PDV2 and ARC5. May contribute to gravitropism in stems and hypocotyls. Seems to influence stromule (stroma-filled tubular extensions of the plastid envelope membrane) length and frequency. The chain is Protein ACCUMULATION AND REPLICATION OF CHLOROPLASTS 6, chloroplastic from Arabidopsis thaliana (Mouse-ear cress).